The chain runs to 601 residues: MTDRVLPEQIRNFGIIAHVDHGKSTLADRILQLTGAVSDRDMREQYLDRLYIERERGITIKSQAVTLQWDCDATQYVLNMVDTPGHVDFTYEVSRSLAACEAAVILVDATQGVEAQTLANLHLAIENNLLIIPVLSKVDLPSADVEGATLELSEVLECRVEDVMHVSGKTGYGVKELLDLIVRKAPPPKGDVTSAPRALIFDSIYDSYRGVVTYVKMCDGTIRVGDKIRMMSTGAEHTLLEVGVSNPEPQSRHSLSVGEVGYFITGVKDVRKSRVGDTITTDTHTATVPLPGYSNPKPMVFSGIYPLNGNEYSALREGLDRLKLSDASIVYTPETSAALGFGFRCGFLGLLHMEIVSERLNREFGLATISTAPSVAYEITPDGEKTLVVMNPSDFPSGKIKEIKEPTVKVSILSPKEYIGSIMELCQARRGVMQGIEYFGSVRAELIYVMPLAEIVFDFFDSLKSRTKGYASFDYNPEGSQPADLVKVDILLQGNKVDAFSAIVHSSKAYSYGSSISKRLSELIPRQQFEVPIQAAIGSRVVARETIRAVRKDVVAKCYGGDITRKRKLLEKQKQGKARMKLIGRVEVPQEVFVATLSSYK.

One can recognise a tr-type G domain in the interval 8–189 (EQIRNFGIIA…LIVRKAPPPK (182 aa)). Position 20 to 25 (20 to 25 (DHGKST)) interacts with GTP.

The protein belongs to the TRAFAC class translation factor GTPase superfamily. Classic translation factor GTPase family. LepA subfamily.

It localises to the cell membrane. The catalysed reaction is GTP + H2O = GDP + phosphate + H(+). Functionally, required for accurate and efficient protein synthesis under certain stress conditions. May act as a fidelity factor of the translation reaction, by catalyzing a one-codon backward translocation of tRNAs on improperly translocated ribosomes. Back-translocation proceeds from a post-translocation (POST) complex to a pre-translocation (PRE) complex, thus giving elongation factor G a second chance to translocate the tRNAs correctly. Binds to ribosomes in a GTP-dependent manner. This Tropheryma whipplei (strain Twist) (Whipple's bacillus) protein is Elongation factor 4.